Here is a 283-residue protein sequence, read N- to C-terminus: Nucleotide-binding protein DR_1434 (283 aa).

8-15 contributes to the ATP binding site; the sequence is GLSGSGKS. 57–60 contributes to the GTP binding site; sequence DTRT.

Belongs to the RapZ-like family.

Displays ATPase and GTPase activities. This Deinococcus radiodurans (strain ATCC 13939 / DSM 20539 / JCM 16871 / CCUG 27074 / LMG 4051 / NBRC 15346 / NCIMB 9279 / VKM B-1422 / R1) protein is Nucleotide-binding protein DR_1434.